Reading from the N-terminus, the 835-residue chain is Cap-specific mRNA (nucleoside-2'-O-)-methyltransferase 1 (835 aa).

Residues 1-66 form a disordered region; the sequence is MKRRNDSECT…TEGKQRSSDS (66 aa). The short motif at 2–19 is the Bipartite nuclear localization signal element; it reads KRRNDSECTAPLKKQKKR. A phosphoserine mark is found at Ser-28, Ser-31, Ser-53, Ser-66, and Ser-91. Residues 57 to 66 are compositionally biased toward basic and acidic residues; sequence TEGKQRSSDS. The G-patch domain occupies 87–133; it reads YNSVSQKLMAKMGFKEGEGLGKYSQGRKDIVEASNQKGRRGLGLTLQ. Position 108 is an N6-acetyllysine (Lys-108). Substrate is bound by residues 203–207 and Arg-218; that span reads KSVFD. The RrmJ-type SAM-dependent 2'-O-MTase domain occupies 231-450; sequence FFLNRAAMKM…ERYVVCKGLK (220 aa). Position 234 (Asn-234) interacts with S-adenosyl-L-methionine. Lys-239 is an active-site residue. S-adenosyl-L-methionine contacts are provided by residues 277–283 and 335–336; these read CAGPGGF and DI. Asp-364 is an active-site residue. Substrate is bound at residue 374–376; that stretch reads NLQ. Lys-404 functions as the Proton acceptor in the catalytic mechanism. Residue Asn-439 participates in substrate binding. The interaction with POLR2A stretch occupies residues 727–835; sequence SSGTPKLSYT…VLSFIQTHSA (109 aa). One can recognise a WW domain in the interval 752-786; sequence RTVNEPWTMGFSKSFKRKFFYNKKTKNSTFDLPAD.

Interacts with POLR2A (via C-terminus).

It localises to the nucleus. It carries out the reaction a 5'-end (N(7)-methyl 5'-triphosphoguanosine)-ribonucleoside in mRNA + S-adenosyl-L-methionine = a 5'-end (N(7)-methyl 5'-triphosphoguanosine)-(2'-O-methyl-ribonucleoside) in mRNA + S-adenosyl-L-homocysteine + H(+). S-adenosyl-L-methionine-dependent methyltransferase that mediates mRNA cap1 2'-O-ribose methylation to the 5'-cap structure of mRNAs. Methylates the ribose of the first nucleotide of a m(7)GpppG-capped mRNA and small nuclear RNA (snRNA) to produce m(7)GpppRm (cap1). Displays a preference for cap0 transcripts. Cap1 modification is linked to higher levels of translation. May be involved in the interferon response pathway. The chain is Cap-specific mRNA (nucleoside-2'-O-)-methyltransferase 1 (CMTR1) from Bos taurus (Bovine).